The sequence spans 430 residues: tRNA(Ile)-lysidine synthase (430 aa).

21-26 (SGGLDS) contacts ATP.

It belongs to the tRNA(Ile)-lysidine synthase family.

The protein localises to the cytoplasm. It carries out the reaction cytidine(34) in tRNA(Ile2) + L-lysine + ATP = lysidine(34) in tRNA(Ile2) + AMP + diphosphate + H(+). Ligates lysine onto the cytidine present at position 34 of the AUA codon-specific tRNA(Ile) that contains the anticodon CAU, in an ATP-dependent manner. Cytidine is converted to lysidine, thus changing the amino acid specificity of the tRNA from methionine to isoleucine. The polypeptide is tRNA(Ile)-lysidine synthase (Salmonella dublin (strain CT_02021853)).